The following is a 198-amino-acid chain: DnaJ homolog subfamily C member 12 (198 aa).

Met1 is modified (N-acetylmethionine). The J domain maps to 14-79 (DYYTLLGCDE…ASRARYDHWR (66 aa)). The interval 112-167 (MLEESDQTPTDKIENEEQDEQKEIKKEEFGSTTEKMEQKESKSVEKSFSPQNPDSP) is disordered. Positions 120–156 (PTDKIENEEQDEQKEIKKEEFGSTTEKMEQKESKSVE) are enriched in basic and acidic residues. Residues Ser160, Ser166, and Ser182 each carry the phosphoserine modification.

Interacts with HSPA8. Interacts with TPH1. Interacts with TPH2.

The protein resides in the cytoplasm. Its function is as follows. Probable co-chaperone that participates in the proper folding of biopterin-dependent aromatic amino acid hydroxylases, which include phenylalanine-4-hydroxylase (PAH), tyrosine 3-monooxygenase (TH) and peripheral and neuronal tryptophan hydroxylases (TPH1 and TPH2). This Bos taurus (Bovine) protein is DnaJ homolog subfamily C member 12 (DNAJC12).